Consider the following 400-residue polypeptide: Argininosuccinate synthase (400 aa).

Residue 8-16 coordinates ATP; that stretch reads AYSGGLDTS. Tyr85 lines the L-citrulline pocket. Gly115 serves as a coordination point for ATP. 3 residues coordinate L-aspartate: Thr117, Asn121, and Asp122. L-citrulline is bound at residue Asn121. Positions 125, 173, 258, and 270 each coordinate L-citrulline.

Belongs to the argininosuccinate synthase family. Type 1 subfamily. As to quaternary structure, homotetramer.

It is found in the cytoplasm. It carries out the reaction L-citrulline + L-aspartate + ATP = 2-(N(omega)-L-arginino)succinate + AMP + diphosphate + H(+). Its pathway is amino-acid biosynthesis; L-arginine biosynthesis; L-arginine from L-ornithine and carbamoyl phosphate: step 2/3. The chain is Argininosuccinate synthase from Staphylococcus haemolyticus (strain JCSC1435).